The primary structure comprises 264 residues: 5'-nucleotidase SurE (264 aa).

4 residues coordinate a divalent metal cation: Asp-10, Asp-11, Ser-43, and Asn-99.

This sequence belongs to the SurE nucleotidase family. A divalent metal cation serves as cofactor.

The protein resides in the cytoplasm. The catalysed reaction is a ribonucleoside 5'-phosphate + H2O = a ribonucleoside + phosphate. In terms of biological role, nucleotidase that shows phosphatase activity on nucleoside 5'-monophosphates. In Methanococcus maripaludis (strain C6 / ATCC BAA-1332), this protein is 5'-nucleotidase SurE.